We begin with the raw amino-acid sequence, 124 residues long: Large ribosomal subunit protein bL21 (124 aa).

This sequence belongs to the bacterial ribosomal protein bL21 family. In terms of assembly, part of the 50S ribosomal subunit. Contacts protein L20.

Functionally, this protein binds to 23S rRNA in the presence of protein L20. This chain is Large ribosomal subunit protein bL21, found in Synechocystis sp. (strain ATCC 27184 / PCC 6803 / Kazusa).